The primary structure comprises 312 residues: Probable myosin light chain kinase DDB_G0282429 (312 aa).

The tract at residues 1 to 28 (MDRMDSSDEEIDNISDDELQSGDEIEVE) is disordered. The segment covering 7–27 (SDEEIDNISDDELQSGDEIEV) has biased composition (acidic residues). The Protein kinase domain maps to 38–290 (YILGNEIGRG…FEQCLIHPWV (253 aa)). ATP is bound by residues 44–52 (IGRGAFSIV) and Lys67. The Proton acceptor role is filled by Asp158.

It belongs to the protein kinase superfamily. CAMK Ser/Thr protein kinase family. CaMK subfamily.

It catalyses the reaction L-seryl-[myosin light chain] + ATP = O-phospho-L-seryl-[myosin light chain] + ADP + H(+). The enzyme catalyses L-threonyl-[myosin light chain] + ATP = O-phospho-L-threonyl-[myosin light chain] + ADP + H(+). With respect to regulation, does not have a calmodulin-binding domain. Functionally, may phosphorylate a specific serine in the N-terminus of a myosin light chain. This is Probable myosin light chain kinase DDB_G0282429 from Dictyostelium discoideum (Social amoeba).